The chain runs to 211 residues: Thiamine-phosphate synthase (211 aa).

Residues 37–41 (QLRIK) and Asn-69 contribute to the 4-amino-2-methyl-5-(diphosphooxymethyl)pyrimidine site. Mg(2+)-binding residues include Asp-70 and Asp-89. Ser-108 contacts 4-amino-2-methyl-5-(diphosphooxymethyl)pyrimidine. 134 to 136 (TQT) provides a ligand contact to 2-[(2R,5Z)-2-carboxy-4-methylthiazol-5(2H)-ylidene]ethyl phosphate. Lys-137 lines the 4-amino-2-methyl-5-(diphosphooxymethyl)pyrimidine pocket. 2-[(2R,5Z)-2-carboxy-4-methylthiazol-5(2H)-ylidene]ethyl phosphate-binding positions include Gly-166 and 186 to 187 (VS).

Belongs to the thiamine-phosphate synthase family. It depends on Mg(2+) as a cofactor.

The enzyme catalyses 2-[(2R,5Z)-2-carboxy-4-methylthiazol-5(2H)-ylidene]ethyl phosphate + 4-amino-2-methyl-5-(diphosphooxymethyl)pyrimidine + 2 H(+) = thiamine phosphate + CO2 + diphosphate. It catalyses the reaction 2-(2-carboxy-4-methylthiazol-5-yl)ethyl phosphate + 4-amino-2-methyl-5-(diphosphooxymethyl)pyrimidine + 2 H(+) = thiamine phosphate + CO2 + diphosphate. It carries out the reaction 4-methyl-5-(2-phosphooxyethyl)-thiazole + 4-amino-2-methyl-5-(diphosphooxymethyl)pyrimidine + H(+) = thiamine phosphate + diphosphate. The protein operates within cofactor biosynthesis; thiamine diphosphate biosynthesis; thiamine phosphate from 4-amino-2-methyl-5-diphosphomethylpyrimidine and 4-methyl-5-(2-phosphoethyl)-thiazole: step 1/1. Its function is as follows. Condenses 4-methyl-5-(beta-hydroxyethyl)thiazole monophosphate (THZ-P) and 2-methyl-4-amino-5-hydroxymethyl pyrimidine pyrophosphate (HMP-PP) to form thiamine monophosphate (TMP). In Klebsiella pneumoniae subsp. pneumoniae (strain ATCC 700721 / MGH 78578), this protein is Thiamine-phosphate synthase.